The following is a 604-amino-acid chain: Threonine--tRNA ligase (604 aa).

Positions 209–500 are catalytic; sequence DHRKLGQEMG…LTEHFGGEFP (292 aa). Positions 301, 352, and 477 each coordinate Zn(2+).

The protein belongs to the class-II aminoacyl-tRNA synthetase family. In terms of assembly, homodimer. Requires Zn(2+) as cofactor.

It localises to the cytoplasm. It carries out the reaction tRNA(Thr) + L-threonine + ATP = L-threonyl-tRNA(Thr) + AMP + diphosphate + H(+). In terms of biological role, catalyzes the attachment of threonine to tRNA(Thr) in a two-step reaction: L-threonine is first activated by ATP to form Thr-AMP and then transferred to the acceptor end of tRNA(Thr). Also edits incorrectly charged L-seryl-tRNA(Thr). This Helicobacter hepaticus (strain ATCC 51449 / 3B1) protein is Threonine--tRNA ligase.